The sequence spans 397 residues: Cystinosin (397 aa).

Positions 1 to 24 (MDFSTHRLTTLLLLLLATVALGNA) are cleaved as a signal peptide. The Lumenal portion of the chain corresponds to 25–126 (QSSQLTVDSH…FVRVTVAKSR (102 aa)). N43 and N86 each carry an N-linked (GlcNAc...) asparagine glycan. The chain crosses the membrane as a helical span at residues 127–147 (ALIYTSIIFGWVYFVAWSVSF). Residues 132 to 187 (SIIFGWVYFVAWSVSFYPQIWSNYRRKSVEGLNFDFLALNIVGFTLYSMFNCGLYF) enclose the PQ-loop 1 domain. Residues 148-167 (YPQIWSNYRRKSVEGLNFDF) lie on the Cytoplasmic side of the membrane. A helical transmembrane segment spans residues 168 to 188 (LALNIVGFTLYSMFNCGLYFI). The Lumenal segment spans residues 189 to 210 (EDLQNEYEVRYPLGVNPVMLND). A helical membrane pass occupies residues 211 to 231 (VVFSLHAMFATCITILQCFFY). At 232 to 239 (QRAQQRVS) the chain is on the cytoplasmic side. The chain crosses the membrane as a helical span at residues 240 to 260 (FIAYGILAIFAVVVVVSAGLA). The Lumenal portion of the chain corresponds to 261–263 (GGS). Residues 264–284 (VIHWLDFLYYCSYVKLTITII) traverse the membrane as a helical segment. A PQ-loop 2 domain is found at 271 to 327 (LYYCSYVKLTITIIKYVPQALMNYRRKSTSGWSIGNILLDFTGGTLSMLQMILNAHN). Topologically, residues 285-302 (KYVPQALMNYRRKSTSGW) are cytoplasmic. Residues 303–323 (SIGNILLDFTGGTLSMLQMIL) traverse the membrane as a helical segment. Topologically, residues 324–340 (NAHNYDDWVSIFGDPTK) are lumenal. A helical membrane pass occupies residues 341–361 (FGLGLFSVLFDVFFMLQHYVF). Topologically, residues 362–397 (YRHSRESSSSDLTTVTDVQNRTNESPPPSEVTTEKY) are cytoplasmic. Residues 373 to 385 (LTTVTDVQNRTNE) are compositionally biased toward polar residues. The interval 373 to 397 (LTTVTDVQNRTNESPPPSEVTTEKY) is disordered.

The protein belongs to the cystinosin family.

It localises to the lysosome membrane. It carries out the reaction L-cystine(out) + H(+)(out) = L-cystine(in) + H(+)(in). Its function is as follows. Cystine/H(+) symporter that mediates export of cystine, the oxidized dimer of cysteine, from lysosomes. Involved in cysteine homeostasis during periods of fasting, which indirectly regulates mTORC1-mediated signaling by supporting de novo CoA synthesis, the TCA cycle and amino acid metabolism during periods of food shortage. Important for maintaining autophagy, and for development and survival during periods of fasting. The chain is Cystinosin from Drosophila melanogaster (Fruit fly).